A 191-amino-acid polypeptide reads, in one-letter code: Protein NUCLEAR FUSION DEFECTIVE 2 (191 aa).

Positions 1-29 are cleaved as a signal peptide; that stretch reads MATLRFTLLLLVFVVGIFFSFSSVSHVRA. An RNase III domain is found at 48–167; sequence LAKLQTQIGY…IFGAIAIDAG (120 aa).

Functionally, required for karyogamy during female gametophyte development, when the two polar nuclei fuse to form the diploid central cell nucleus. This Arabidopsis thaliana (Mouse-ear cress) protein is Protein NUCLEAR FUSION DEFECTIVE 2.